A 190-amino-acid chain; its full sequence is Peptidyl-tRNA hydrolase (190 aa).

Position 19 (Y19) interacts with tRNA. H24 acts as the Proton acceptor in catalysis. 3 residues coordinate tRNA: Y72, N74, and N121.

This sequence belongs to the PTH family.

The protein localises to the mitochondrion. The enzyme catalyses an N-acyl-L-alpha-aminoacyl-tRNA + H2O = an N-acyl-L-amino acid + a tRNA + H(+). Its function is as follows. Peptidyl-tRNA hydrolase involved in the recycling of tRNA-Lys from diacetyl-lysyl-tRNA-Lys and is important for mitochondrial function. This Saccharomyces cerevisiae (strain ATCC 204508 / S288c) (Baker's yeast) protein is Peptidyl-tRNA hydrolase (PTH1).